Consider the following 435-residue polypeptide: ATP-dependent protease ATPase subunit HslU (435 aa).

ATP-binding positions include Ile-18, 60 to 65 (GVGKTE), Asp-248, Glu-313, and Arg-385.

This sequence belongs to the ClpX chaperone family. HslU subfamily. In terms of assembly, a double ring-shaped homohexamer of HslV is capped on each side by a ring-shaped HslU homohexamer. The assembly of the HslU/HslV complex is dependent on binding of ATP.

It is found in the cytoplasm. Functionally, ATPase subunit of a proteasome-like degradation complex; this subunit has chaperone activity. The binding of ATP and its subsequent hydrolysis by HslU are essential for unfolding of protein substrates subsequently hydrolyzed by HslV. HslU recognizes the N-terminal part of its protein substrates and unfolds these before they are guided to HslV for hydrolysis. The protein is ATP-dependent protease ATPase subunit HslU of Rhizobium etli (strain ATCC 51251 / DSM 11541 / JCM 21823 / NBRC 15573 / CFN 42).